The following is a 169-amino-acid chain: uncharacterized protein (169 aa).

This is an uncharacterized protein from Mycoplasma pneumoniae (strain ATCC 29342 / M129 / Subtype 1) (Mycoplasmoides pneumoniae).